A 660-amino-acid polypeptide reads, in one-letter code: Bifunctional polymyxin resistance protein ArnA (660 aa).

Residues 1 to 304 (MKTVVFAYHD…MLGLVQGSRL (304 aa)) are formyltransferase ArnAFT. 86-88 (HLI) serves as a coordination point for (6R)-10-formyltetrahydrofolate. His104 serves as the catalytic Proton donor; for formyltransferase activity. (6R)-10-formyltetrahydrofolate-binding positions include Arg114 and 136-140 (VKRAD). Residues 314–660 (RRTRVLILGV…RTVDLTDKPS (347 aa)) form a dehydrogenase ArnADH region. Residues Asp347 and 368-369 (DI) each bind NAD(+). UDP-alpha-D-glucuronate is bound by residues Ala393, Tyr398, and 432–433 (TS). Glu434 acts as the Proton acceptor; for decarboxylase activity in catalysis. UDP-alpha-D-glucuronate contacts are provided by residues Arg460, Asn492, 526 to 535 (KLIDGGKQKR), and Tyr613. Residue Arg619 is the Proton donor; for decarboxylase activity of the active site.

In the N-terminal section; belongs to the Fmt family. UDP-L-Ara4N formyltransferase subfamily. This sequence in the C-terminal section; belongs to the NAD(P)-dependent epimerase/dehydratase family. UDP-glucuronic acid decarboxylase subfamily. Homohexamer, formed by a dimer of trimers.

It carries out the reaction UDP-alpha-D-glucuronate + NAD(+) = UDP-beta-L-threo-pentopyranos-4-ulose + CO2 + NADH. The enzyme catalyses UDP-4-amino-4-deoxy-beta-L-arabinose + (6R)-10-formyltetrahydrofolate = UDP-4-deoxy-4-formamido-beta-L-arabinose + (6S)-5,6,7,8-tetrahydrofolate + H(+). Its pathway is nucleotide-sugar biosynthesis; UDP-4-deoxy-4-formamido-beta-L-arabinose biosynthesis; UDP-4-deoxy-4-formamido-beta-L-arabinose from UDP-alpha-D-glucuronate: step 1/3. It functions in the pathway nucleotide-sugar biosynthesis; UDP-4-deoxy-4-formamido-beta-L-arabinose biosynthesis; UDP-4-deoxy-4-formamido-beta-L-arabinose from UDP-alpha-D-glucuronate: step 3/3. It participates in bacterial outer membrane biogenesis; lipopolysaccharide biosynthesis. Bifunctional enzyme that catalyzes the oxidative decarboxylation of UDP-glucuronic acid (UDP-GlcUA) to UDP-4-keto-arabinose (UDP-Ara4O) and the addition of a formyl group to UDP-4-amino-4-deoxy-L-arabinose (UDP-L-Ara4N) to form UDP-L-4-formamido-arabinose (UDP-L-Ara4FN). The modified arabinose is attached to lipid A and is required for resistance to polymyxin and cationic antimicrobial peptides. In Shigella flexneri, this protein is Bifunctional polymyxin resistance protein ArnA.